The following is a 498-amino-acid chain: ATP synthase subunit beta, chloroplastic (498 aa).

An ATP-binding site is contributed by 172–179 (GGAGVGKT).

The protein belongs to the ATPase alpha/beta chains family. F-type ATPases have 2 components, CF(1) - the catalytic core - and CF(0) - the membrane proton channel. CF(1) has five subunits: alpha(3), beta(3), gamma(1), delta(1), epsilon(1). CF(0) has four main subunits: a(1), b(1), b'(1) and c(9-12).

It localises to the plastid. The protein resides in the chloroplast thylakoid membrane. It carries out the reaction ATP + H2O + 4 H(+)(in) = ADP + phosphate + 5 H(+)(out). Its function is as follows. Produces ATP from ADP in the presence of a proton gradient across the membrane. The catalytic sites are hosted primarily by the beta subunits. This is ATP synthase subunit beta, chloroplastic from Lemna minor (Common duckweed).